Reading from the N-terminus, the 276-residue chain is NAD kinase (276 aa).

D61 acts as the Proton acceptor in catalysis. Residues 61 to 62, 134 to 135, R145, K162, D164, V172, 175 to 180, and Q234 each bind NAD(+); these read DG, ND, and TAYSFS.

It belongs to the NAD kinase family. A divalent metal cation is required as a cofactor.

It is found in the cytoplasm. The catalysed reaction is NAD(+) + ATP = ADP + NADP(+) + H(+). Functionally, involved in the regulation of the intracellular balance of NAD and NADP, and is a key enzyme in the biosynthesis of NADP. Catalyzes specifically the phosphorylation on 2'-hydroxyl of the adenosine moiety of NAD to yield NADP. The sequence is that of NAD kinase from Clostridium perfringens (strain 13 / Type A).